Here is a 335-residue protein sequence, read N- to C-terminus: Holliday junction branch migration complex subunit RuvB (335 aa).

The tract at residues 4 to 184 (ADRIISTSAK…FGIVQRLEFY (181 aa)) is large ATPase domain (RuvB-L). Residues Ile23, Arg24, Gly65, Lys68, Thr69, Thr70, 131-133 (EDY), Arg174, Tyr184, and Arg221 each bind ATP. Thr69 is a binding site for Mg(2+). A small ATPAse domain (RuvB-S) region spans residues 185–255 (AVEDLTSIVA…SAKAALLMLD (71 aa)). Residues 258 to 335 (DAGFDYLDRK…RYFGLEKLTE (78 aa)) are head domain (RuvB-H). DNA is bound by residues Arg294, Arg313, and Arg318.

Belongs to the RuvB family. Homohexamer. Forms an RuvA(8)-RuvB(12)-Holliday junction (HJ) complex. HJ DNA is sandwiched between 2 RuvA tetramers; dsDNA enters through RuvA and exits via RuvB. An RuvB hexamer assembles on each DNA strand where it exits the tetramer. Each RuvB hexamer is contacted by two RuvA subunits (via domain III) on 2 adjacent RuvB subunits; this complex drives branch migration. In the full resolvosome a probable DNA-RuvA(4)-RuvB(12)-RuvC(2) complex forms which resolves the HJ.

The protein resides in the cytoplasm. It carries out the reaction ATP + H2O = ADP + phosphate + H(+). In terms of biological role, the RuvA-RuvB-RuvC complex processes Holliday junction (HJ) DNA during genetic recombination and DNA repair, while the RuvA-RuvB complex plays an important role in the rescue of blocked DNA replication forks via replication fork reversal (RFR). RuvA specifically binds to HJ cruciform DNA, conferring on it an open structure. The RuvB hexamer acts as an ATP-dependent pump, pulling dsDNA into and through the RuvAB complex. RuvB forms 2 homohexamers on either side of HJ DNA bound by 1 or 2 RuvA tetramers; 4 subunits per hexamer contact DNA at a time. Coordinated motions by a converter formed by DNA-disengaged RuvB subunits stimulates ATP hydrolysis and nucleotide exchange. Immobilization of the converter enables RuvB to convert the ATP-contained energy into a lever motion, pulling 2 nucleotides of DNA out of the RuvA tetramer per ATP hydrolyzed, thus driving DNA branch migration. The RuvB motors rotate together with the DNA substrate, which together with the progressing nucleotide cycle form the mechanistic basis for DNA recombination by continuous HJ branch migration. Branch migration allows RuvC to scan DNA until it finds its consensus sequence, where it cleaves and resolves cruciform DNA. The sequence is that of Holliday junction branch migration complex subunit RuvB from Pasteurella multocida (strain Pm70).